Consider the following 873-residue polypeptide: Cilia- and flagella-associated protein 58 (873 aa).

2 coiled-coil regions span residues 106–609 (VDSA…VISE) and 642–832 (ETQY…QKRK). The interval 202–221 (QEIQHRQNEASRESRKKEKL) is disordered. The span at 204 to 221 (IQHRQNEASRESRKKEKL) shows a compositional bias: basic and acidic residues.

This sequence belongs to the CFAP58 family. As to quaternary structure, interacts with ODFP2. Predominantly expressed in the testis. Also found at lower levels in ciliated cells and tissues such as neural progenitor cells and oviducts.

Its subcellular location is the cell projection. The protein localises to the cilium. It localises to the flagellum. The protein resides in the cytoplasm. It is found in the cytoskeleton. Its subcellular location is the microtubule organizing center. The protein localises to the centrosome. Has an essential role in the assembly and organization of the sperm flagellar axoneme. Required for the elongation of the primary cilium and sperm flagellar midpiece via modulation of the Notch signaling pathway. This is Cilia- and flagella-associated protein 58 from Mus musculus (Mouse).